The primary structure comprises 233 residues: Nuclear speckle RNA-binding protein A (233 aa).

3 disordered regions span residues 1-54 (MADG…VPDT), 68-92 (VQSGEGGSVSMGRSGGGGGGGGGNV), and 214-233 (FLRLQFSRKPGSRPGQRGRR). The segment covering 71–91 (GEGGSVSMGRSGGGGGGGGGN) has biased composition (gly residues). One can recognise an RRM domain in the interval 136–222 (NTLYVEGLPS…KFLRLQFSRK (87 aa)).

As to expression, expressed in root meristems, lateral root primordia and root vascular tissues.

It localises to the nucleus speckle. Functionally, alternative splicing (AS) regulator that binds to specific mRNAs and modulates auxin effects on the transcriptome. Displaced from its targets upon binding to AS competitor long non-coding RNA (ASCO-RNA). The polypeptide is Nuclear speckle RNA-binding protein A (Arabidopsis thaliana (Mouse-ear cress)).